The chain runs to 679 residues: Glycine--tRNA ligase beta subunit (679 aa).

The protein belongs to the class-II aminoacyl-tRNA synthetase family. Tetramer of two alpha and two beta subunits.

The protein resides in the cytoplasm. It carries out the reaction tRNA(Gly) + glycine + ATP = glycyl-tRNA(Gly) + AMP + diphosphate. This Streptococcus equi subsp. zooepidemicus (strain H70) protein is Glycine--tRNA ligase beta subunit.